Here is a 141-residue protein sequence, read N- to C-terminus: Acetyltransferase YE1169 (141 aa).

The 141-residue stretch at 1–141 (MEIRVFQQSD…GKRLIVDQEY (141 aa)) folds into the N-acetyltransferase domain.

Belongs to the acetyltransferase family. YpeA subfamily.

The polypeptide is Acetyltransferase YE1169 (Yersinia enterocolitica serotype O:8 / biotype 1B (strain NCTC 13174 / 8081)).